We begin with the raw amino-acid sequence, 545 residues long: Light-independent protochlorophyllide reductase subunit N (545 aa).

Residues cysteine 102, cysteine 127, and cysteine 187 each contribute to the [4Fe-4S] cluster site.

Belongs to the BchN/ChlN family. As to quaternary structure, protochlorophyllide reductase is composed of three subunits; ChlL, ChlN and ChlB. Forms a heterotetramer of two ChlB and two ChlN subunits. [4Fe-4S] cluster serves as cofactor.

It localises to the plastid. Its subcellular location is the chloroplast. It catalyses the reaction chlorophyllide a + oxidized 2[4Fe-4S]-[ferredoxin] + 2 ADP + 2 phosphate = protochlorophyllide a + reduced 2[4Fe-4S]-[ferredoxin] + 2 ATP + 2 H2O. The protein operates within porphyrin-containing compound metabolism; chlorophyll biosynthesis (light-independent). In terms of biological role, component of the dark-operative protochlorophyllide reductase (DPOR) that uses Mg-ATP and reduced ferredoxin to reduce ring D of protochlorophyllide (Pchlide) to form chlorophyllide a (Chlide). This reaction is light-independent. The NB-protein (ChlN-ChlB) is the catalytic component of the complex. The chain is Light-independent protochlorophyllide reductase subunit N from Chlamydomonas reinhardtii (Chlamydomonas smithii).